Consider the following 289-residue polypeptide: Lipoyl synthase 2 (289 aa).

[4Fe-4S] cluster-binding residues include Cys43, Cys48, Cys54, Cys69, Cys73, Cys76, and Ser282. The Radical SAM core domain occupies 55–271; that stretch reads YAQKTATFLL…GAVARDLGFA (217 aa).

This sequence belongs to the radical SAM superfamily. Lipoyl synthase family. Requires [4Fe-4S] cluster as cofactor.

Its subcellular location is the cytoplasm. The enzyme catalyses [[Fe-S] cluster scaffold protein carrying a second [4Fe-4S](2+) cluster] + N(6)-octanoyl-L-lysyl-[protein] + 2 oxidized [2Fe-2S]-[ferredoxin] + 2 S-adenosyl-L-methionine + 4 H(+) = [[Fe-S] cluster scaffold protein] + N(6)-[(R)-dihydrolipoyl]-L-lysyl-[protein] + 4 Fe(3+) + 2 hydrogen sulfide + 2 5'-deoxyadenosine + 2 L-methionine + 2 reduced [2Fe-2S]-[ferredoxin]. It functions in the pathway protein modification; protein lipoylation via endogenous pathway; protein N(6)-(lipoyl)lysine from octanoyl-[acyl-carrier-protein]: step 2/2. Its function is as follows. Catalyzes the radical-mediated insertion of two sulfur atoms into the C-6 and C-8 positions of the octanoyl moiety bound to the lipoyl domains of lipoate-dependent enzymes, thereby converting the octanoylated domains into lipoylated derivatives. The protein is Lipoyl synthase 2 of Gloeobacter violaceus (strain ATCC 29082 / PCC 7421).